The following is a 451-amino-acid chain: Phosphoglucosamine mutase (451 aa).

The Phosphoserine intermediate role is filled by serine 103. Mg(2+) contacts are provided by serine 103, aspartate 243, aspartate 245, and aspartate 247. A Phosphoserine modification is found at serine 103.

It belongs to the phosphohexose mutase family. It depends on Mg(2+) as a cofactor. In terms of processing, activated by phosphorylation.

It carries out the reaction alpha-D-glucosamine 1-phosphate = D-glucosamine 6-phosphate. In terms of biological role, catalyzes the conversion of glucosamine-6-phosphate to glucosamine-1-phosphate. The polypeptide is Phosphoglucosamine mutase (Lactobacillus johnsonii (strain CNCM I-12250 / La1 / NCC 533)).